Reading from the N-terminus, the 635-residue chain is Threonine--tRNA ligase (635 aa).

The TGS domain maps to 1 to 61; that stretch reads MIKITLKDGS…KEDAALELLT (61 aa). Residues 242 to 532 are catalytic; the sequence is DHRKLGQELD…LTEHFAGAFP (291 aa). Positions 333, 384, and 509 each coordinate Zn(2+).

Belongs to the class-II aminoacyl-tRNA synthetase family. Homodimer. The cofactor is Zn(2+).

It localises to the cytoplasm. The catalysed reaction is tRNA(Thr) + L-threonine + ATP = L-threonyl-tRNA(Thr) + AMP + diphosphate + H(+). Functionally, catalyzes the attachment of threonine to tRNA(Thr) in a two-step reaction: L-threonine is first activated by ATP to form Thr-AMP and then transferred to the acceptor end of tRNA(Thr). Also edits incorrectly charged L-seryl-tRNA(Thr). This is Threonine--tRNA ligase from Desulforamulus reducens (strain ATCC BAA-1160 / DSM 100696 / MI-1) (Desulfotomaculum reducens).